We begin with the raw amino-acid sequence, 391 residues long: Rhizopuspepsin-2 (391 aa).

A signal peptide spans 1–21 (MKLTLISSCVALAFMALATEA). The propeptide at 22-68 (APSGKKLSIPLTKNTNYKPSAKNAIQKALAKYHRFRTTSSSNSTSTE) is activation peptide. Positions 84-388 (YYGKVTVGTP…NQEVPEVQIA (305 aa)) constitute a Peptidase A1 domain. The active site involves Asp-102. A disulfide bridge links Cys-115 with Cys-118. Asp-285 is a catalytic residue. Residues Cys-319 and Cys-352 are joined by a disulfide bond.

Belongs to the peptidase A1 family.

The catalysed reaction is Hydrolysis of proteins with broad specificity similar to that of pepsin A, preferring hydrophobic residues at P1 and P1'. Clots milk and activates trypsinogen. Does not cleave 4-Gln-|-His-5, but does cleave 10-His-|-Leu-11 and 12-Val-|-Glu-13 in B chain of insulin.. The chain is Rhizopuspepsin-2 from Rhizopus niveus.